A 170-amino-acid chain; its full sequence is Archaemetzincin (170 aa).

His-110 lines the Zn(2+) pocket. Glu-111 acts as the Proton acceptor in catalysis. His-114, His-120, Cys-121, Cys-125, Cys-144, and Cys-147 together coordinate Zn(2+).

It belongs to the peptidase M54 family. In terms of assembly, monomer. Zn(2+) serves as cofactor.

Functionally, probable zinc metalloprotease whose natural substrate is unknown. This chain is Archaemetzincin, found in Nanoarchaeum equitans (strain Kin4-M).